The chain runs to 89 residues: Small ribosomal subunit protein uS15 (89 aa).

It belongs to the universal ribosomal protein uS15 family. Part of the 30S ribosomal subunit. Forms a bridge to the 50S subunit in the 70S ribosome, contacting the 23S rRNA.

Functionally, one of the primary rRNA binding proteins, it binds directly to 16S rRNA where it helps nucleate assembly of the platform of the 30S subunit by binding and bridging several RNA helices of the 16S rRNA. Its function is as follows. Forms an intersubunit bridge (bridge B4) with the 23S rRNA of the 50S subunit in the ribosome. The polypeptide is Small ribosomal subunit protein uS15 (Pseudomonas entomophila (strain L48)).